The sequence spans 109 residues: U4-lycotoxin-Ls1c (109 aa).

The signal sequence occupies residues 1–22 (MKVLVLFSVLFLTLFSYSSTEA). A propeptide spanning residues 23-44 (IDEFDSDAEDDMLSLMANEQVR) is cleaved from the precursor. Positions 45 to 88 (AKACTPRLHDCSHDRHSCCRGELFKDVCYCFYPEGEDITEVCSC) are knottin domain. Cystine bridges form between cysteine 48-cysteine 63, cysteine 55-cysteine 72, cysteine 62-cysteine 88, and cysteine 74-cysteine 86. The tract at residues 89–108 (QQPKSHKYIEKVVDKAKTVV) is linear cationic cytotoxin domain.

This sequence belongs to the neurotoxin 19 (CSTX) family. 05 (U4-Lctx) subfamily. Expressed by the venom gland.

The protein resides in the secreted. Functionally, enhances the high-affinity desensitization of human P2RX3 purinoceptors. The sequence is that of U4-lycotoxin-Ls1c from Lycosa singoriensis (Wolf spider).